Consider the following 148-residue polypeptide: Lysozyme C (148 aa).

Residues 1–18 (MKVLIILGLVLLSVMVQG) form the signal peptide. The C-type lysozyme domain occupies 19 to 148 (KVFERCELAR…VSQYVQGCGV (130 aa)). Disulfide bonds link Cys-24–Cys-146, Cys-48–Cys-134, Cys-83–Cys-99, and Cys-95–Cys-113. Residues Glu-53 and Asp-71 contribute to the active site.

The protein belongs to the glycosyl hydrolase 22 family. In terms of assembly, monomer.

The enzyme catalyses Hydrolysis of (1-&gt;4)-beta-linkages between N-acetylmuramic acid and N-acetyl-D-glucosamine residues in a peptidoglycan and between N-acetyl-D-glucosamine residues in chitodextrins.. In terms of biological role, lysozymes have primarily a bacteriolytic function; those in tissues and body fluids are associated with the monocyte-macrophage system and enhance the activity of immunoagents. The sequence is that of Lysozyme C (LYZ) from Callithrix jacchus (White-tufted-ear marmoset).